Consider the following 183-residue polypeptide: Porphobilinogen deaminase (183 aa).

Belongs to the HMBS family. In terms of assembly, monomer. The cofactor is dipyrromethane.

The catalysed reaction is 4 porphobilinogen + H2O = hydroxymethylbilane + 4 NH4(+). Its pathway is porphyrin-containing compound metabolism; protoporphyrin-IX biosynthesis; coproporphyrinogen-III from 5-aminolevulinate: step 2/4. Its function is as follows. Tetrapolymerization of the monopyrrole PBG into the hydroxymethylbilane pre-uroporphyrinogen in several discrete steps. This chain is Porphobilinogen deaminase (hemC), found in Yersinia intermedia.